Consider the following 544-residue polypeptide: Putative cysteine ligase BshC (544 aa).

A coiled-coil region spans residues 431–463; sequence LNDTCRTIKEEHEKFIQELSRLDEKIYDFEEKN.

This sequence belongs to the BshC family.

Functionally, involved in bacillithiol (BSH) biosynthesis. May catalyze the last step of the pathway, the addition of cysteine to glucosamine malate (GlcN-Mal) to generate BSH. The polypeptide is Putative cysteine ligase BshC (Natranaerobius thermophilus (strain ATCC BAA-1301 / DSM 18059 / JW/NM-WN-LF)).